Here is a 97-residue protein sequence, read N- to C-terminus: MEIRKSAVAGTLESSDVQIMLSAGNNGIEFELVSDVAKQFGDAIKETITDVLNTYGVTDAAVSVVDKGALDMVIRARAIAVVQRALDIVDTPNWEVL.

At S14 the chain carries O-(phosphoribosyl dephospho-coenzyme A)serine.

It belongs to the CitD family. As to quaternary structure, oligomer with a subunit composition of (alpha,beta,gamma)6.

It is found in the cytoplasm. Functionally, covalent carrier of the coenzyme of citrate lyase. The polypeptide is Citrate lyase acyl carrier protein (citD) (Weissella paramesenteroides (Leuconostoc paramesenteroides)).